An 89-amino-acid chain; its full sequence is uncharacterized protein (89 aa).

It to Synechocystis PCC 6803 slr1025.

This is an uncharacterized protein from Ureaplasma parvum serovar 3 (strain ATCC 700970).